Consider the following 136-residue polypeptide: Small ribosomal subunit protein uS11 (136 aa).

2 disordered regions span residues 1-20 (MAQR…NVTN) and 115-136 (VTPQ…EKAR). Residues 125–136 (PPKRVLKREKAR) show a composition bias toward basic residues.

The protein belongs to the universal ribosomal protein uS11 family. Part of the 30S ribosomal subunit. Interacts with proteins S7 and S18. Binds to IF-3.

Functionally, located on the platform of the 30S subunit, it bridges several disparate RNA helices of the 16S rRNA. Forms part of the Shine-Dalgarno cleft in the 70S ribosome. In Mycoplasmopsis pulmonis (strain UAB CTIP) (Mycoplasma pulmonis), this protein is Small ribosomal subunit protein uS11.